Reading from the N-terminus, the 461-residue chain is Lysosomal dipeptide transporter MFSD1 (461 aa).

The span at 1-13 (MADREEHQGLLDG) shows a compositional bias: basic and acidic residues. The interval 1–22 (MADREEHQGLLDGDRDEDEGDK) is disordered. The Dileucine internalization motif motif lies at 10–11 (LL). The next 10 helical transmembrane spans lie at 37–57 (LLHRILVLIFMCFLGFGSYFC), 81–101 (QLYAWYSWPNVVLCFLGGFLL), 111–131 (TVIFSLFVLVGQIIFAAGALA), 134–154 (FWLMNVGRFVFGIGGESLAVA), 264–284 (LWLIFIICVAYYVAIFPFIGL), 302–322 (AINSVVYIISAPASPLLGFLV), 331–351 (WVMLAVITTLLSHMMLAFTFW), 359–379 (LLGVSYSLLACALWPMVAFVV), 390–410 (FMQSIQNLGLAVMSIAAGSIL), and 416–436 (LFLEVFFIACLCMALLAVVLL).

It belongs to the major facilitator superfamily. Homodimer. Interacts with lysosomal protein GLMP (via lumenal domain); the interaction starts while both proteins are still in the endoplasmic reticulum and is required for stabilization of MFSD1 in lysosomes but has no direct effect on its targeting to lysosomes or transporter activity.

It is found in the lysosome membrane. It catalyses the reaction L-alpha-aminoacyl-L-arginine(out) = L-alpha-aminoacyl-L-arginine(in). The catalysed reaction is L-arginyl-L-alpha-amino acid(out) = L-arginyl-L-alpha-amino acid(in). The enzyme catalyses L-arginyl-glycine(out) = L-arginyl-glycine(in). It carries out the reaction L-alpha-aminoacyl-L-lysine(out) = L-alpha-aminoacyl-L-lysine(in). It catalyses the reaction L-aspartyl-L-lysine(out) = L-aspartyl-L-lysine(in). The catalysed reaction is L-alanyl-L-lysine(out) = L-alanyl-L-lysine(in). The enzyme catalyses L-lysyl-L-alpha-amino acid(out) = L-lysyl-L-alpha-amino acid(in). It carries out the reaction L-lysyl-L-alanine(out) = L-lysyl-L-alanine(in). It catalyses the reaction L-lysyl-L-lysine(out) = L-lysyl-L-lysine(in). The catalysed reaction is L-lysyl-glycine(out) = L-lysyl-glycine(in). The enzyme catalyses L-alpha-aminoacyl-L-histidine(out) = L-alpha-aminoacyl-L-histidine(in). It carries out the reaction L-histidyl-L-alpha-amino acid(out) = L-histidyl-L-alpha-amino acid(in). It catalyses the reaction L-histidyl-glycine(out) = L-histidyl-glycine(in). Lysosomal dipeptide uniporter that selectively exports lysine, arginine or histidine-containing dipeptides with a net positive charge from the lysosome lumen into the cytosol. Could play a role in a specific type of protein O-glycosylation indirectly regulating macrophages migration and tissue invasion. Also essential for liver homeostasis. This is Lysosomal dipeptide transporter MFSD1 (mfsd1) from Danio rerio (Zebrafish).